Here is a 189-residue protein sequence, read N- to C-terminus: Rho-related protein racM (189 aa).

Position 12–19 (glycine 12–threonine 19) interacts with GTP. The Effector region motif lies at tyrosine 35 to phenylalanine 43. GTP is bound by residues aspartate 60 to glycine 64 and threonine 118 to aspartate 121. Cysteine methyl ester is present on cysteine 186. A lipid anchor (S-geranylgeranyl cysteine) is attached at cysteine 186. Residues isoleucine 187–leucine 189 constitute a propeptide, removed in mature form.

Belongs to the small GTPase superfamily. Rho family.

It localises to the cell membrane. This chain is Rho-related protein racM (racM), found in Dictyostelium discoideum (Social amoeba).